A 249-amino-acid polypeptide reads, in one-letter code: 3-deoxy-D-manno-octulosonic acid kinase (249 aa).

Residue Asp-175 is part of the active site.

It belongs to the protein kinase superfamily. KdkA/RfaP family.

It is found in the cell inner membrane. It carries out the reaction an alpha-Kdo-(2-&gt;6)-lipid IVA + ATP = a 4-O-phospho-alpha-Kdo-(2-&gt;6)-lipid IVA + ADP + H(+). Its pathway is bacterial outer membrane biogenesis; LPS core biosynthesis. Catalyzes the ATP-dependent phosphorylation of the 3-deoxy-D-manno-octulosonic acid (Kdo) residue in Kdo-lipid IV(A) at the 4-OH position. The sequence is that of 3-deoxy-D-manno-octulosonic acid kinase from Xanthomonas oryzae pv. oryzae (strain PXO99A).